The primary structure comprises 208 residues: Ypt/Rab-type GTPase ypt71 (208 aa).

GTP-binding positions include 17–23, 33–40, glycine 66, 124–127, and 158–160; these read SGVGKTC, FSREYKAT, NQID, and SAK. Positions 37-45 match the Effector region motif; the sequence is YKATIGADF. S-geranylgeranyl cysteine attachment occurs at residues cysteine 206 and cysteine 208. Cysteine 208 carries the post-translational modification Cysteine methyl ester.

It belongs to the small GTPase superfamily. Rab family.

It localises to the vacuole membrane. Its activity is regulated as follows. Rab activation is generally mediated by a guanine exchange factor (GEF), while inactivation through hydrolysis of bound GTP is catalyzed by a GTPase activating protein (GAP). Its function is as follows. Ypt/Rab-type GTPases are key regulators of membrane trafficking and intracellular vesicular transport. They act as molecular switches that convert between GTP-bound and GDP-bound states, and regulate virtually all steps of membrane traffic from the formation of the transport vesicle at the donor membrane to its fusion at the target membrane. In the GDP-bound state, Ypt proteins are predominantly cytosolic, solubilized through the interaction with a GDP dissociation inhibitor (GDI). In the GTP-bound state, the proteins are membrane bound and interact with specific effector proteins that select cargo, promote vesicle movement, or verify the correct site of fusion. Act antagonistically to ypt7 in regulating vacuolar morphology, promoting vacuolar fission. This Schizosaccharomyces pombe (strain 972 / ATCC 24843) (Fission yeast) protein is Ypt/Rab-type GTPase ypt71 (ypt71).